The sequence spans 186 residues: Adenine phosphoribosyltransferase (186 aa).

It belongs to the purine/pyrimidine phosphoribosyltransferase family. Homodimer.

It localises to the cytoplasm. The catalysed reaction is AMP + diphosphate = 5-phospho-alpha-D-ribose 1-diphosphate + adenine. The protein operates within purine metabolism; AMP biosynthesis via salvage pathway; AMP from adenine: step 1/1. Its function is as follows. Catalyzes a salvage reaction resulting in the formation of AMP, that is energically less costly than de novo synthesis. The polypeptide is Adenine phosphoribosyltransferase (Xanthomonas campestris pv. campestris (strain 8004)).